Reading from the N-terminus, the 540-residue chain is Probable quinate permease (540 aa).

Topologically, residues Met1–Tyr22 are cytoplasmic. A helical transmembrane segment spans residues Leu23–Gly43. The Extracellular portion of the chain corresponds to Thr44–Ser74. Residues Cys75–Gly95 traverse the membrane as a helical segment. Topologically, residues Arg96–Lys97 are cytoplasmic. The chain crosses the membrane as a helical span at residues Trp98–Asn118. Residues Gly119–Arg130 lie on the Extracellular side of the membrane. The chain crosses the membrane as a helical span at residues Val131–Leu151. Topologically, residues Ala152–Arg157 are cytoplasmic. A helical membrane pass occupies residues Gly158–Ile178. At Asn179–Trp193 the chain is on the extracellular side. The chain crosses the membrane as a helical span at residues Ile194 to Leu214. The Cytoplasmic segment spans residues Arg215–Arg285. Residues Leu286 to Tyr306 traverse the membrane as a helical segment. Residues Tyr307–Phe325 lie on the Extracellular side of the membrane. The chain crosses the membrane as a helical span at residues Ser326 to Ile346. The Cytoplasmic segment spans residues Asp347 to Arg352. A helical membrane pass occupies residues Leu353–Ile373. Over Lys374 to Thr387 the chain is Extracellular. A helical membrane pass occupies residues Gly388 to Trp408. The Cytoplasmic portion of the chain corresponds to Asn409–Tyr456. The chain crosses the membrane as a helical span at residues Gly457–Ile477. Residues Pro478–Ala540 lie on the Extracellular side of the membrane. The interval Ile519–Ala540 is disordered. Basic and acidic residues predominate over residues Gly528–Ala540.

Belongs to the major facilitator superfamily. Sugar transporter (TC 2.A.1.1) family. Interacts with creB. In terms of processing, ubiquitinated. Deubiquitinated by creB, probably to control its activity or amount.

Its subcellular location is the cell membrane. In terms of biological role, integral membrane transporter that imports quinic acid to be catabolized as a carbon source. In Aspergillus clavatus (strain ATCC 1007 / CBS 513.65 / DSM 816 / NCTC 3887 / NRRL 1 / QM 1276 / 107), this protein is Probable quinate permease (qutD).